Here is a 162-residue protein sequence, read N- to C-terminus: Transcription elongation factor GreA (162 aa).

The stretch at glutamate 45 to glutamate 74 forms a coiled coil.

It belongs to the GreA/GreB family.

Its function is as follows. Necessary for efficient RNA polymerase transcription elongation past template-encoded arresting sites. The arresting sites in DNA have the property of trapping a certain fraction of elongating RNA polymerases that pass through, resulting in locked ternary complexes. Cleavage of the nascent transcript by cleavage factors such as GreA or GreB allows the resumption of elongation from the new 3'terminus. GreA releases sequences of 2 to 3 nucleotides. This chain is Transcription elongation factor GreA, found in Rickettsia felis (strain ATCC VR-1525 / URRWXCal2) (Rickettsia azadi).